The sequence spans 931 residues: Protein translocase subunit SecA (931 aa).

Residues Gln87, 105 to 109 (GEGKT), and Asp515 each bind ATP. Residues Cys915, Cys917, Cys926, and His927 each coordinate Zn(2+).

This sequence belongs to the SecA family. As to quaternary structure, monomer and homodimer. Part of the essential Sec protein translocation apparatus which comprises SecA, SecYEG and auxiliary proteins SecDF-YajC and YidC. Requires Zn(2+) as cofactor.

The protein localises to the cell inner membrane. Its subcellular location is the cytoplasm. It carries out the reaction ATP + H2O + cellular proteinSide 1 = ADP + phosphate + cellular proteinSide 2.. Its function is as follows. Part of the Sec protein translocase complex. Interacts with the SecYEG preprotein conducting channel. Has a central role in coupling the hydrolysis of ATP to the transfer of proteins into and across the cell membrane, serving both as a receptor for the preprotein-SecB complex and as an ATP-driven molecular motor driving the stepwise translocation of polypeptide chains across the membrane. The polypeptide is Protein translocase subunit SecA (Burkholderia ambifaria (strain ATCC BAA-244 / DSM 16087 / CCUG 44356 / LMG 19182 / AMMD) (Burkholderia cepacia (strain AMMD))).